Here is a 321-residue protein sequence, read N- to C-terminus: Transmembrane protein 255A (321 aa).

4 helical membrane-spanning segments follow: residues 29–49 (VFVTVTLLIVSSLIFTLGMAA), 56–76 (VTVGGYYPGVILGFGSILGII), 88–108 (LVASIVFISFGVIAAFCCAIV), and 200–220 (TILNIVGLFLGIITAAVLGGF). Residues 279-297 (STPSGLSDDPNGQASSFMW) are compositionally biased toward polar residues. A disordered region spans residues 279 to 300 (STPSGLSDDPNGQASSFMWPSN).

The protein belongs to the TMEM255 family.

The protein resides in the membrane. This is Transmembrane protein 255A (tmem255a) from Xenopus laevis (African clawed frog).